The primary structure comprises 409 residues: Cdc42 effector protein 1 (409 aa).

The tract at residues Met-1 to Gly-29 is disordered. Residues Ser-19 and Ser-27 each carry the phosphoserine modification. Thr-34 is modified (phosphothreonine). In terms of domain architecture, CRIB spans Ile-38–Gly-52. Ser-39 carries the phosphoserine modification. Arg-53 is modified (omega-N-methylarginine). A phosphoserine mark is found at Ser-65, Ser-77, Ser-101, Ser-113, Ser-121, and Ser-139. Basic and acidic residues predominate over residues Pro-167–Gln-189. Residues Pro-167–Arg-203 form a disordered region. Phosphoserine occurs at positions 191, 205, 207, and 210. 3 repeat units span residues Pro-235–Val-241, Pro-242–Ala-248, and Pro-255–Ala-261. The 3 X 7 AA tandem repeats of [PT]-[AT]-A-[ENT]-[PT]-[PTS]-[AG] stretch occupies residues Pro-235–Pro-284. 2 disordered regions span residues Ala-237–Pro-260 and Pro-282–His-329. Positions Thr-243–Lys-258 are enriched in pro residues. Over residues Pro-282–Ser-291 the composition is skewed to low complexity. Residues Ser-312, Ser-332, Ser-368, and Ser-371 each carry the phosphoserine modification.

This sequence belongs to the BORG/CEP family. As to quaternary structure, interacts with RHOQ and CDC42, in a GTP-dependent manner.

The protein resides in the endomembrane system. The protein localises to the cytoplasm. It is found in the cytoskeleton. Its function is as follows. Probably involved in the organization of the actin cytoskeleton. Induced membrane extensions in fibroblasts. The sequence is that of Cdc42 effector protein 1 (Cdc42ep1) from Mus musculus (Mouse).